A 264-amino-acid chain; its full sequence is Thiazole synthase (264 aa).

The Schiff-base intermediate with DXP role is filled by K101. Residues G162, A189–G190, and N211–T212 each bind 1-deoxy-D-xylulose 5-phosphate. A disordered region spans residues K245–Q264.

The protein belongs to the ThiG family. As to quaternary structure, homotetramer. Forms heterodimers with either ThiH or ThiS.

The protein localises to the cytoplasm. It carries out the reaction [ThiS sulfur-carrier protein]-C-terminal-Gly-aminoethanethioate + 2-iminoacetate + 1-deoxy-D-xylulose 5-phosphate = [ThiS sulfur-carrier protein]-C-terminal Gly-Gly + 2-[(2R,5Z)-2-carboxy-4-methylthiazol-5(2H)-ylidene]ethyl phosphate + 2 H2O + H(+). Its pathway is cofactor biosynthesis; thiamine diphosphate biosynthesis. Functionally, catalyzes the rearrangement of 1-deoxy-D-xylulose 5-phosphate (DXP) to produce the thiazole phosphate moiety of thiamine. Sulfur is provided by the thiocarboxylate moiety of the carrier protein ThiS. In vitro, sulfur can be provided by H(2)S. This is Thiazole synthase from Cellvibrio japonicus (strain Ueda107) (Pseudomonas fluorescens subsp. cellulosa).